The following is a 337-amino-acid chain: Beta-ketoacyl-[acyl-carrier-protein] synthase III (337 aa).

Residues cysteine 119 and histidine 260 contribute to the active site. Positions 261–265 (QANQR) are ACP-binding. Asparagine 290 is an active-site residue.

It belongs to the thiolase-like superfamily. FabH family. Homodimer.

It is found in the cytoplasm. The catalysed reaction is malonyl-[ACP] + acetyl-CoA + H(+) = 3-oxobutanoyl-[ACP] + CO2 + CoA. Its pathway is lipid metabolism; fatty acid biosynthesis. Catalyzes the condensation reaction of fatty acid synthesis by the addition to an acyl acceptor of two carbons from malonyl-ACP. Catalyzes the first condensation reaction which initiates fatty acid synthesis and may therefore play a role in governing the total rate of fatty acid production. Possesses both acetoacetyl-ACP synthase and acetyl transacylase activities. Its substrate specificity determines the biosynthesis of branched-chain and/or straight-chain of fatty acids. The sequence is that of Beta-ketoacyl-[acyl-carrier-protein] synthase III from Synechococcus sp. (strain WH7803).